The sequence spans 544 residues: Chaperonin GroEL 1 (544 aa).

ATP contacts are provided by residues 29–32 (TLGP), 86–90 (DGTTT), G413, and D495.

It belongs to the chaperonin (HSP60) family. As to quaternary structure, forms a cylinder of 14 subunits composed of two heptameric rings stacked back-to-back. Interacts with the co-chaperonin GroES.

The protein localises to the cytoplasm. The catalysed reaction is ATP + H2O + a folded polypeptide = ADP + phosphate + an unfolded polypeptide.. Functionally, together with its co-chaperonin GroES, plays an essential role in assisting protein folding. The GroEL-GroES system forms a nano-cage that allows encapsulation of the non-native substrate proteins and provides a physical environment optimized to promote and accelerate protein folding. This chain is Chaperonin GroEL 1, found in Synechococcus sp. (strain ATCC 27144 / PCC 6301 / SAUG 1402/1) (Anacystis nidulans).